We begin with the raw amino-acid sequence, 89 residues long: Putative regulatory protein MAE_11840 (89 aa).

It belongs to the RemA family.

The chain is Putative regulatory protein MAE_11840 from Microcystis aeruginosa (strain NIES-843 / IAM M-2473).